The sequence spans 216 residues: Redox-sensing transcriptional repressor Rex 1 (216 aa).

A DNA-binding region (H-T-H motif) is located at residues 16–55 (LYYRYLRMLHDTGKNKVSSTELSEAVQVDSATIRRDFSYF). 90-95 (GVGNLG) provides a ligand contact to NAD(+).

It belongs to the transcriptional regulatory Rex family. In terms of assembly, homodimer.

The protein resides in the cytoplasm. In terms of biological role, modulates transcription in response to changes in cellular NADH/NAD(+) redox state. This chain is Redox-sensing transcriptional repressor Rex 1, found in Enterococcus faecalis (strain ATCC 700802 / V583).